The sequence spans 516 residues: Protein P54 (516 aa).

The signal sequence occupies residues 1-27 (MKKSLLSAVMLSSIALTAVGSPIAAAA). Positions 208 to 397 (ATAEDKKADL…PAPAPAPNPS (190 aa)) are disordered. Over residues 210–236 (AEDKKADLNRKKAEAEAEQARIREQAR) the composition is skewed to basic and acidic residues. 2 stretches are compositionally biased toward low complexity: residues 237-247 (LAEQARQQAAQ) and 257-380 (QAAA…TVTP). Over residues 381–395 (APTPTPTPAPAPAPN) the composition is skewed to pro residues. Positions 399–516 (SVNGAAIVAE…WYTPDFAVSM (118 aa)) constitute a NlpC/P60 domain. Residue Cys429 is the Nucleophile of the active site. His480 acts as the Proton acceptor in catalysis. Residue His492 is part of the active site.

This sequence belongs to the peptidase C40 family.

The protein resides in the secreted. Its subcellular location is the cell wall. This is Protein P54 from Enterococcus faecium (Streptococcus faecium).